The sequence spans 214 residues: Nodulation protein A (214 aa).

It belongs to the NodA family.

It localises to the cytoplasm. Its function is as follows. N-acyltransferase required for nodulation. Acts in the production of a small, heat-stable compound (Nod) that stimulates mitosis in various plant protoplasts. This is Nodulation protein A from Methylobacterium nodulans (strain LMG 21967 / CNCM I-2342 / ORS 2060).